We begin with the raw amino-acid sequence, 308 residues long: ATP synthase gamma chain (308 aa).

It belongs to the ATPase gamma chain family. In terms of assembly, F-type ATPases have 2 components, CF(1) - the catalytic core - and CF(0) - the membrane proton channel. CF(1) has five subunits: alpha(3), beta(3), gamma(1), delta(1), epsilon(1). CF(0) has three main subunits: a, b and c.

The protein resides in the cell inner membrane. Produces ATP from ADP in the presence of a proton gradient across the membrane. The gamma chain is believed to be important in regulating ATPase activity and the flow of protons through the CF(0) complex. The chain is ATP synthase gamma chain from Bartonella tribocorum (strain CIP 105476 / IBS 506).